A 377-amino-acid chain; its full sequence is Homoserine O-succinyltransferase (377 aa).

In terms of domain architecture, AB hydrolase-1 spans 50 to 358 (NAILVCHALS…PSTYGHDSFL (309 aa)). Residue Ser156 is the Nucleophile of the active site. Arg226 lines the substrate pocket. Residues Asp321 and His354 contribute to the active site. Asp355 is a substrate binding site.

Belongs to the AB hydrolase superfamily. MetX family. In terms of assembly, homodimer.

It is found in the cytoplasm. The catalysed reaction is L-homoserine + succinyl-CoA = O-succinyl-L-homoserine + CoA. It participates in amino-acid biosynthesis; L-methionine biosynthesis via de novo pathway; O-succinyl-L-homoserine from L-homoserine: step 1/1. Functionally, transfers a succinyl group from succinyl-CoA to L-homoserine, forming succinyl-L-homoserine. The protein is Homoserine O-succinyltransferase of Nitrosomonas eutropha (strain DSM 101675 / C91 / Nm57).